Here is a 166-residue protein sequence, read N- to C-terminus: Regulator of ribonuclease activity A (166 aa).

Belongs to the RraA family. In terms of assembly, homotrimer. Binds to both RNA-binding sites in the C-terminal region of Rne and to RhlB.

The protein localises to the cytoplasm. Globally modulates RNA abundance by binding to RNase E (Rne) and regulating its endonucleolytic activity. Can modulate Rne action in a substrate-dependent manner by altering the composition of the degradosome. Modulates RNA-binding and helicase activities of the degradosome. The protein is Regulator of ribonuclease activity A of Pasteurella multocida (strain Pm70).